We begin with the raw amino-acid sequence, 417 residues long: Tumor necrosis factor receptor superfamily member 25 (417 aa).

Positions Met1–Ala24 are cleaved as a signal peptide. Residues Gln25 to Gln199 are Extracellular-facing. TNFR-Cys repeat units lie at residues Asp34–Leu71, Val72–Cys115, Gly116–Gly163, and Thr164–Ala192. 12 disulfide bridges follow: Cys35-Cys47, Cys48-Cys61, Cys51-Cys70, Cys73-Cys89, Cys92-Cys107, Cys95-Cys115, Cys117-Cys130, Cys138-Cys155, Cys141-Cys162, Cys165-Cys176, Cys179-Cys191, and Cys187-Cys195. N-linked (GlcNAc...) asparagine glycosylation is present at Asn67. An N-linked (GlcNAc...) asparagine glycan is attached at Asn106. A helical membrane pass occupies residues Met200 to Leu220. The Cytoplasmic segment spans residues Thr221–Pro417. A Death domain is found at Gly332–Leu413. (Microbial infection) N-beta-linked (GlcNAc) arginine glycosylation is present at Arg352.

In terms of assembly, homodimer. Interacts strongly via the death domains with TNFRSF1 and TRADD to activate at least two distinct signaling cascades, apoptosis and NF-kappa-B signaling. Interacts with BAG4. (Microbial infection) Glycosylated at Arg-352 by enteropathogenic E.coli protein NleB1. In terms of processing, glycosylated. In terms of tissue distribution, abundantly expressed in thymocytes and lymphocytes. Detected in lymphocyte-rich tissues such as thymus, colon, intestine, and spleen. Also found in the prostate.

The protein localises to the cell membrane. It is found in the secreted. Receptor for TNFSF12/APO3L/TWEAK. Interacts directly with the adapter TRADD. Mediates activation of NF-kappa-B and induces apoptosis. May play a role in regulating lymphocyte homeostasis. The sequence is that of Tumor necrosis factor receptor superfamily member 25 (TNFRSF25) from Homo sapiens (Human).